The following is a 382-amino-acid chain: Lipid-A-disaccharide synthase (382 aa).

Belongs to the LpxB family.

The enzyme catalyses 2-N,3-O-bis[(3R)-3-hydroxytetradecanoyl]-alpha-D-glucosaminyl 1-phosphate + UDP-2-N,3-O-bis[(3R)-3-hydroxytetradecanoyl]-alpha-D-glucosamine = lipid A disaccharide (E. coli) + UDP + H(+). It carries out the reaction a lipid X + a UDP-2-N,3-O-bis[(3R)-3-hydroxyacyl]-alpha-D-glucosamine = a lipid A disaccharide + UDP + H(+). The protein operates within glycolipid biosynthesis; lipid IV(A) biosynthesis; lipid IV(A) from (3R)-3-hydroxytetradecanoyl-[acyl-carrier-protein] and UDP-N-acetyl-alpha-D-glucosamine: step 5/6. In terms of biological role, condensation of UDP-2,3-diacylglucosamine and 2,3-diacylglucosamine-1-phosphate to form lipid A disaccharide, a precursor of lipid A, a phosphorylated glycolipid that anchors the lipopolysaccharide to the outer membrane of the cell. The polypeptide is Lipid-A-disaccharide synthase (Escherichia fergusonii (strain ATCC 35469 / DSM 13698 / CCUG 18766 / IAM 14443 / JCM 21226 / LMG 7866 / NBRC 102419 / NCTC 12128 / CDC 0568-73)).